A 467-amino-acid chain; its full sequence is Multiple inositol polyphosphate phosphatase 1 (467 aa).

The signal sequence occupies residues 1–15; the sequence is MRLLILLLLPLVAIA. H67 is a catalytic residue. N120, N159, and N234 each carry an N-linked (GlcNAc...) asparagine glycan. G441 is lipidated: GPI-anchor amidated glycine. Residues 442-467 constitute a propeptide, removed in mature form; sequence GAPSLGSGVGGLLATTLAAMLVYLMH.

Belongs to the histidine acid phosphatase family. MINPP1 subfamily. In terms of processing, N-glycosylated.

It localises to the cell membrane. The protein resides in the apical cell membrane. It is found in the basolateral cell membrane. Its subcellular location is the cell projection. The protein localises to the filopodium. It localises to the cell junction. It carries out the reaction (2R)-2,3-bisphosphoglycerate + H2O = (2R)-2-phosphoglycerate + phosphate. The catalysed reaction is 1D-myo-inositol hexakisphosphate + H2O = 1D-myo-inositol 1,2,4,5,6-pentakisphosphate + phosphate. It catalyses the reaction 1D-myo-inositol 1,2,4,5,6-pentakisphosphate + H2O = 1D-myo-inositol 1,2,5,6-tetrakisphosphate + phosphate. The enzyme catalyses 1D-myo-inositol 1,2,5,6-tetrakisphosphate + H2O = 1D-myo-inositol 1,2,6-trisphosphate + phosphate. Its function is as follows. Probable multiple inositol polyphosphate phosphatase that hydrolyzes 1D-myo-inositol 1,3,4,5,6-pentakisphosphate (InsP5[2OH]) and 1D-myo-inositol hexakisphosphate (InsP6) to a range of less phosphorylated inositol phosphates. This regulates the availability of these various small molecule second messengers and metal chelators which control many aspects of cell physiology. May have a dual substrate specificity, and function as a 2,3-bisphosphoglycerate 3-phosphatase hydrolyzing 2,3-bisphosphoglycerate to 2-phosphoglycerate. 2,3-bisphosphoglycerate (BPG) is formed as part of the Rapoport-Luebering glycolytic bypass. Has a role in embryonic tracheal development where it localizes to the leading edge of actively migrating branches. In these leading cells, enhances formation and/or maintenance of filopodia which may drive branch migration and elongation by cell-cell intercalation. The function in tracheal morphogenesis is dependent on its inositol polyphosphate phosphatase activity. This Drosophila melanogaster (Fruit fly) protein is Multiple inositol polyphosphate phosphatase 1.